Reading from the N-terminus, the 73-residue chain is Bacterioferritin-associated ferredoxin (73 aa).

[2Fe-2S] cluster is bound by residues C4 and C6. Positions 26 and 29 each coordinate phosphate. C38 and C41 together coordinate [2Fe-2S] cluster. K46 contacts phosphate.

This sequence belongs to the Bfd family. As to quaternary structure, monomer. Interacts with BfrB; up to 12 Bfd proteins can bind to the BfrB bacterioferritin complex (BFR). One Bfd protein binds to a BfrB dimer in the BFR, with the [2Fe-2S] cluster positioned about 22 Angstroms above the heme of BfrB. Does not interact with FtnA. Requires [2Fe-2S] cluster as cofactor. It depends on phosphate as a cofactor.

Functionally, required for mobilization of iron from the bacterioferritin (BFR) complex, composed of BfrB and FtnA in varying proportions; mobilization requires the [2Fe-2S] cluster of this protein. Reduction of the BfrB heme group occurs in the presence of Bfd, strongly suggesting that the BfrB-Bfd complex allows heme to mediate electron transfer from FPR to the Fe(3+) iron core in the BFR prior to its release as Fe(2+). This is Bacterioferritin-associated ferredoxin from Pseudomonas aeruginosa (strain ATCC 15692 / DSM 22644 / CIP 104116 / JCM 14847 / LMG 12228 / 1C / PRS 101 / PAO1).